A 385-amino-acid polypeptide reads, in one-letter code: Chaperone protein DnaJ (385 aa).

One can recognise a J domain in the interval 5–70; sequence DYYEVLGVSK…DKKAAYDRFG (66 aa). The CR-type zinc-finger motif lies at 143 to 221; the sequence is GLSKQITVPS…CGGAGRQEKD (79 aa). The Zn(2+) site is built by C156, C159, C173, C176, C195, C198, C209, and C212. 4 CXXCXGXG motif repeats span residues 156–163, 173–180, 195–202, and 209–216; these read CSSCDGTG, CPTCSGMG, CPTCNGMG, and CRTCGGAG. Residues 299-323 form a disordered region; the sequence is GGRSRVRVPEGSQSGRQMRLRGKGM.

It belongs to the DnaJ family. As to quaternary structure, homodimer. Zn(2+) serves as cofactor.

It localises to the cytoplasm. Its function is as follows. Participates actively in the response to hyperosmotic and heat shock by preventing the aggregation of stress-denatured proteins and by disaggregating proteins, also in an autonomous, DnaK-independent fashion. Unfolded proteins bind initially to DnaJ; upon interaction with the DnaJ-bound protein, DnaK hydrolyzes its bound ATP, resulting in the formation of a stable complex. GrpE releases ADP from DnaK; ATP binding to DnaK triggers the release of the substrate protein, thus completing the reaction cycle. Several rounds of ATP-dependent interactions between DnaJ, DnaK and GrpE are required for fully efficient folding. Also involved, together with DnaK and GrpE, in the DNA replication of plasmids through activation of initiation proteins. The polypeptide is Chaperone protein DnaJ (Jannaschia sp. (strain CCS1)).